Consider the following 512-residue polypeptide: Probable multidrug resistance protein EmrY (512 aa).

The Cytoplasmic portion of the chain corresponds to 1-8 (MAITKSTP). Residues 9–29 (APLTGGTLWCVTIALSLATFM) form a helical membrane-spanning segment. Residue glutamine 30 is a topological domain, periplasmic. A helical membrane pass occupies residues 31 to 51 (MLDSTISNVAIPTISGFLGAS). Residues 52–53 (TD) lie on the Cytoplasmic side of the membrane. A helical membrane pass occupies residues 54-74 (EGTWVITSFGVANAIAIPVTG). The Periplasmic portion of the chain corresponds to 75–84 (RLAQRIGELR). Transmembrane regions (helical) follow at residues 85–105 (LFLL…LSTN) and 106–126 (LDVL…LIPL). Topologically, residues 127–141 (SQSLLLRNYPPEKRT) are periplasmic. Residues 142–162 (FALALWSMTVIIAPICGPILG) form a helical membrane-spanning segment. The Cytoplasmic segment spans residues 163–172 (GYICDNFSWG). A helical membrane pass occupies residues 173–193 (WIFLINVPMGIIVLTLCLTLL). Residues 194–204 (KGRETETSPVK) are Periplasmic-facing. The chain crosses the membrane as a helical span at residues 205–225 (MNLPGLTLLVLGVGGLQIMLD). Residues 226–234 (KGRDLDWFN) are Cytoplasmic-facing. The helical transmembrane segment at 235–255 (SSTIIILTVVSVISLISLVIW) threads the bilayer. Over 256-273 (ESTSENPILDLSLFKSRN) the chain is Periplasmic. Residues 274 to 294 (FTIGIVSITCAYLFYSGAIVL) form a helical membrane-spanning segment. At 295-307 (MPQLLQETMGYNA) the chain is on the cytoplasmic side. Residues 308 to 328 (IWAGLAYAPIGIMPLLISPLI) traverse the membrane as a helical segment. Over 329–338 (GRYGNKIDMR) the chain is Periplasmic. A helical transmembrane segment spans residues 339–359 (LLVTFSFLMYAVCYYWRSVTF). At 360-364 (MPTID) the chain is on the cytoplasmic side. Residues 365 to 385 (FTGIILPQFFQGFAVACFFLP) traverse the membrane as a helical segment. Over 386-486 (LTTISFSGLP…LSISANEIFR (101 aa)) the chain is Periplasmic. The chain crosses the membrane as a helical span at residues 487-507 (MAAIAFILLTVLVWFAKPPFT). Residues 508–512 (AKGVG) are Cytoplasmic-facing.

This sequence belongs to the major facilitator superfamily. EmrB family. In terms of assembly, part of the tripartite efflux system EmrYK-TolC, which is composed of an inner membrane transporter, EmrY, a membrane fusion protein, EmrK, and an outer membrane component, TolC. The complex forms a large protein conduit and can translocate molecules across both the inner and outer membranes.

It localises to the cell inner membrane. In terms of biological role, part of the tripartite efflux system EmrYK-TolC, which confers resistance to various drugs. In Escherichia coli (strain K12), this protein is Probable multidrug resistance protein EmrY (emrY).